Here is a 351-residue protein sequence, read N- to C-terminus: Actin maturation protease (351 aa).

Positions 1-19 (MTSPCSPPLKPPISPPKTP) are enriched in pro residues. The disordered stretch occupies residues 1 to 70 (MTSPCSPPLK…PPAATGPAPR (70 aa)). Over residues 36 to 50 (LDFSALPSPPWSQQT) the composition is skewed to low complexity. The segment covering 51–64 (PVPPPLPLPPPPAA) has biased composition (pro residues). Residues 124 to 244 (SLIQEGPQCG…WAVSAGVLLG (121 aa)) form a peptidase C39-like region. Residue Cys132 is part of the active site. Ser316 bears the Phosphoserine mark.

Belongs to the ACTMAP family. As to quaternary structure, interacts (via N-terminus) with PFN2 isoforms IIa and IIb; the interactions may facilitate efficient cleavage of the acetylated N-terminus of immature actin. Interacts with PFN1.

The protein localises to the cytoplasm. It catalyses the reaction N-terminal N(alpha)-acetyl-L-methionyl-L-aspartyl-[protein] + H2O = N-terminal L-aspartyl-[protein] + N-acetyl-L-methionine. The catalysed reaction is N-terminal N(alpha)-acetyl-L-methionyl-L-glutamyl-[protein] + H2O = N-terminal L-glutamyl-[protein] + N-acetyl-L-methionine. The enzyme catalyses N-terminal N(alpha)-acetyl-L-cysteinyl-L-aspartyl-[protein] + H2O = N-terminal L-aspartyl-[protein] + N-acetyl-L-cysteine. It carries out the reaction N-terminal N(alpha)-acetyl-L-cysteinyl-L-glutamyl-[protein] + H2O = N-terminal L-glutamyl-[protein] + N-acetyl-L-cysteine. In terms of biological role, actin maturation protease that specifically mediates the cleavage of immature acetylated N-terminal actin, thereby contributing to actin maturation. Cleaves N-terminal acetylated methionine of immature cytoplasmic beta- and gamma-actins ACTB and ACTG1 after translation. Cleaves N-terminal acetylated cysteine of muscle alpha-actins ACTA1, ACTC1 and ACTA2 after canonical removal of N-terminal methionine. This chain is Actin maturation protease, found in Homo sapiens (Human).